The primary structure comprises 126 residues: Putative lipoprotein LprD (126 aa).

Positions 1–21 are cleaved as a signal peptide; sequence MSTTRRRRPALIALVIIATCG. Residue cysteine 22 is the site of N-palmitoyl cysteine attachment. Cysteine 22 carries S-diacylglycerol cysteine lipidation. The helical transmembrane segment at 40–60 threads the bilayer; the sequence is FQNLGYALQWPLFAWFCVYAY. A disordered region spans residues 70–101; the sequence is PPQPPTGGAAAEIPAGLLPERPKPAQQPPDDP.

To M.leprae ML1177.

Its subcellular location is the cell membrane. In Mycobacterium tuberculosis (strain CDC 1551 / Oshkosh), this protein is Putative lipoprotein LprD (lprD).